The sequence spans 152 residues: Deoxyuridine 5'-triphosphate nucleotidohydrolase (152 aa).

Residues 71–73 (RSG), N84, 88–90 (LID), and M98 contribute to the substrate site.

Belongs to the dUTPase family. Requires Mg(2+) as cofactor.

The enzyme catalyses dUTP + H2O = dUMP + diphosphate + H(+). It functions in the pathway pyrimidine metabolism; dUMP biosynthesis; dUMP from dCTP (dUTP route): step 2/2. In terms of biological role, this enzyme is involved in nucleotide metabolism: it produces dUMP, the immediate precursor of thymidine nucleotides and it decreases the intracellular concentration of dUTP so that uracil cannot be incorporated into DNA. The sequence is that of Deoxyuridine 5'-triphosphate nucleotidohydrolase from Pectobacterium carotovorum subsp. carotovorum (strain PC1).